Reading from the N-terminus, the 241-residue chain is Zinc finger CCHC domain-containing protein 24 (241 aa).

S65 and S93 each carry phosphoserine. The CCHC-type zinc-finger motif lies at 132–149 (YLCHLCFNKGHYIKDCPQ).

The protein is Zinc finger CCHC domain-containing protein 24 (ZCCHC24) of Macaca fascicularis (Crab-eating macaque).